The following is a 148-amino-acid chain: Large ribosomal subunit protein bL9 (148 aa).

Belongs to the bacterial ribosomal protein bL9 family.

Functionally, binds to the 23S rRNA. The polypeptide is Large ribosomal subunit protein bL9 (Pseudomonas putida (strain GB-1)).